The following is a 253-amino-acid chain: Phycoerythrobilin:ferredoxin oxidoreductase (253 aa).

The protein belongs to the HY2 family.

The enzyme catalyses (3Z)-phycoerythrobilin + oxidized 2[4Fe-4S]-[ferredoxin] = 15,16-dihydrobiliverdin + reduced 2[4Fe-4S]-[ferredoxin] + 2 H(+). Functionally, catalyzes the two-electron reduction of the C2 and C3(1) diene system of 15,16-dihydrobiliverdin. In Prochlorococcus marinus (strain MIT 9312), this protein is Phycoerythrobilin:ferredoxin oxidoreductase.